The primary structure comprises 374 residues: Acid phosphatase-like protein XcAP-1 (374 aa).

Residues Thr1–Ala17 form the signal peptide. Val25 provides a ligand contact to serotonin. 3 disulfide bridges follow: Cys144/Cys372, Cys165/Cys219, and Cys345/Cys349. Positions 245, 249, 271, and 283 each coordinate serotonin.

It belongs to the histidine acid phosphatase family.

It is found in the secreted. In terms of biological role, probably modulates blood feeding of fleas on vertebrate species by binding and sequestering different mediators involved in the host response. Binds biogenic amines: serotonin, adrenaline and noradrenaline. Binds leukotriene C4. Does not bind histamine, leukotriene B4, leukotriene D4, leukotriene E4, ADP, and stable analogs of thromboxane A2: U-46619 and cTXA2. The polypeptide is Acid phosphatase-like protein XcAP-1 (Xenopsylla cheopis (Oriental rat flea)).